A 204-amino-acid polypeptide reads, in one-letter code: MVKKEVKPIDITATLRCKVAVVGEATVGKSALISMFTSKGSKFLKDYAMTSGVEVVVAPVTIPDTTVSVELFLLDTAGSDLYKEQISQYWNGVYYAILVFDVSSMESFESCKAWFELLKSARPDRERPLRAVLVANKTDLPPQRHQVRLDMAQDWATTNTLDFFDVSANPPGKDADAPFLSIATTFYRNYEDKVAAFQDACRNY.

GTP is bound by residues 23 to 30, 75 to 79, and 136 to 139; these read GEATVGKS, DTAGS, and NKTD.

The protein belongs to the small GTPase superfamily. Rab family. As to quaternary structure, component of the IFT complex B, the core composed of IFT25, IFT27, IFT46, IFT52, IFT74, IFT81 and IFT88 as well as associated subunits IFT20, IFT57, IFT80 and IFT172. Interacts with IFT25; the interaction is direct.

The protein localises to the cell projection. It localises to the cilium. The protein resides in the flagellum. Its subcellular location is the cytoplasm. It is found in the cytoskeleton. The protein localises to the flagellum basal body. Functionally, small GTPase-like component of the intraflagellar transport (IFT) complex B. Forms a subcomplex within the IFT complex B with IFT25. Has very low GTPase activity either because it lacks the conserved catalytic Gln in position 79 or because it requires some GTPase-activating protein (GAP) for GTP turnover. In Chlamydomonas reinhardtii (Chlamydomonas smithii), this protein is Intraflagellar transport protein 27 (IFT27).